A 258-amino-acid polypeptide reads, in one-letter code: Transmembrane O-methyltransferase homolog (258 aa).

Residues Glu-104, 106-107, Ser-112, Glu-130, and Ser-160 contribute to the S-adenosyl-L-methionine site; that span reads GT.

Belongs to the class I-like SAM-binding methyltransferase superfamily. Cation-dependent O-methyltransferase family. In terms of assembly, interacts with LHFPL5, PCDH15, TMC1, TMC2 and TMIE. The interaction of TOMT with TMC1 and TMC2 is required for the transportation of TMC1/2 into the stereocilia of hair cells. Interacts directly with TMC1. In terms of tissue distribution, widely expressed with high levels in outer and inner hair cells of the cochlea and vestibule.

Its subcellular location is the cytoplasm. The protein resides in the endoplasmic reticulum. It catalyses the reaction a catechol + S-adenosyl-L-methionine = a guaiacol + S-adenosyl-L-homocysteine + H(+). Its function is as follows. Catalyzes the O-methylation, and thereby the inactivation, of catecholamine neurotransmitters and catechol hormones. Required for auditory function. Component of the cochlear hair cell's mechanotransduction (MET) machinery. Involved in the assembly of the asymmetric tip-link MET complex. Required for transportation of TMC1 and TMC2 proteins into the mechanically sensitive stereocilia of the hair cells. The function in MET is independent of the enzymatic activity. This is Transmembrane O-methyltransferase homolog from Mus musculus (Mouse).